The primary structure comprises 94 residues: uncharacterized protein (94 aa).

In terms of tissue distribution, expressed in heart.

This is an uncharacterized protein from Homo sapiens (Human).